Consider the following 498-residue polypeptide: Phosphonates import ATP-binding protein PhnC (498 aa).

The interval 1–27 is disordered; it reads MPQRPEAARAGPVAGPDAASKPAPGPA. One can recognise an ABC transporter domain in the interval 28-269; that stretch reads LTLRGAGRAY…DLGELYEARR (242 aa). Residue 60–67 participates in ATP binding; the sequence is GPSGAGKS. Residues 270–498 are lysR substrate binding domain; that stretch reads GAADPARAPA…LEVARAEVPP (229 aa).

This sequence belongs to the ABC transporter superfamily. Phosphonates importer (TC 3.A.1.9.1) family. In terms of assembly, the complex is composed of two ATP-binding proteins (PhnC), two transmembrane proteins (PhnE) and a solute-binding protein (PhnD).

The protein localises to the cell inner membrane. It carries out the reaction phosphonate(out) + ATP + H2O = phosphonate(in) + ADP + phosphate + H(+). Part of the ABC transporter complex PhnCDE involved in phosphonates import. Responsible for energy coupling to the transport system. The sequence is that of Phosphonates import ATP-binding protein PhnC from Anaeromyxobacter dehalogenans (strain 2CP-C).